The primary structure comprises 450 residues: tRNA-2-methylthio-N(6)-dimethylallyladenosine synthase (450 aa).

One can recognise an MTTase N-terminal domain in the interval 2–119 (KKVFVKTYGC…LPDLIARRQR (118 aa)). [4Fe-4S] cluster is bound by residues C11, C48, C82, C156, C160, and C163. The 234-residue stretch at 142–375 (RVEGPSAFVS…QATIEENVQR (234 aa)) folds into the Radical SAM core domain. The TRAM domain occupies 378-448 (QGMVGTVQRI…PHSLRGEIVV (71 aa)).

This sequence belongs to the methylthiotransferase family. MiaB subfamily. As to quaternary structure, monomer. Requires [4Fe-4S] cluster as cofactor.

It localises to the cytoplasm. The catalysed reaction is N(6)-dimethylallyladenosine(37) in tRNA + (sulfur carrier)-SH + AH2 + 2 S-adenosyl-L-methionine = 2-methylsulfanyl-N(6)-dimethylallyladenosine(37) in tRNA + (sulfur carrier)-H + 5'-deoxyadenosine + L-methionine + A + S-adenosyl-L-homocysteine + 2 H(+). Functionally, catalyzes the methylthiolation of N6-(dimethylallyl)adenosine (i(6)A), leading to the formation of 2-methylthio-N6-(dimethylallyl)adenosine (ms(2)i(6)A) at position 37 in tRNAs that read codons beginning with uridine. The chain is tRNA-2-methylthio-N(6)-dimethylallyladenosine synthase from Cupriavidus taiwanensis (strain DSM 17343 / BCRC 17206 / CCUG 44338 / CIP 107171 / LMG 19424 / R1) (Ralstonia taiwanensis (strain LMG 19424)).